We begin with the raw amino-acid sequence, 292 residues long: MSTISAALVMQLRERTGAGMMECKKFLIATNGDIEQAIIEMRKAGQAKADKKADRVAAEGIIVIARSSDERTAVMLEINSETDFVARDENFTNFANAVADIALTSLPKNIEDLSNQALSSGATVEQARQELVAKIGENIKLRRLEKMHCDGVIGYYLHGSRIGVMVALKNGSEALAKDIAMHVAASKPMVVSRDQVPAEAIENEREIFTAQAKESGKPQEIIDKMIDGRINKFIDEVSLLGQPYVKDPNIKVGQLLKEKNAEVISFVRYEVGEGIEKKEDNFVEEVMAQVRT.

The segment at 82 to 85 (TDFV) is involved in Mg(2+) ion dislocation from EF-Tu.

Belongs to the EF-Ts family.

The protein localises to the cytoplasm. Functionally, associates with the EF-Tu.GDP complex and induces the exchange of GDP to GTP. It remains bound to the aminoacyl-tRNA.EF-Tu.GTP complex up to the GTP hydrolysis stage on the ribosome. This Legionella pneumophila (strain Lens) protein is Elongation factor Ts.